The chain runs to 1185 residues: ELMO domain-containing protein F (1185 aa).

8 disordered regions span residues 88-133 (QPSP…GNNN), 176-196 (ISTN…NTAE), 361-409 (NNNS…VENE), 566-628 (KSTD…NTKS), 642-805 (ETER…KSSG), 819-868 (LGEK…PYII), 883-989 (DLDF…TQVT), and 1044-1114 (QKQK…KPVL). Composition is skewed to low complexity over residues 94–127 (STIH…SSPI), 176–194 (ISTN…NNNT), 361–406 (NNNS…NNNV), and 587–613 (PQSQ…SSSS). The 214-residue stretch at 275–488 (DRQNVLSFLN…KTRAVLSRIK (214 aa)) folds into the ELMO domain. The span at 648-665 (SLTGSNGITDGGDSNPNS) shows a compositional bias: polar residues. Positions 688-699 (SENGSSSSFSFE) are enriched in low complexity. Polar residues predominate over residues 721–732 (FNSLTGELTMNI). Low complexity-rich tracts occupy residues 733–760 (SSSS…PNVS) and 767–780 (TTTT…TTTT). A compositionally biased stretch (polar residues) spans 781–790 (DDQSQQQVPP). Residues 829–841 (KVKSKKEKKKKSK) are compositionally biased toward basic residues. 4 stretches are compositionally biased toward low complexity: residues 853–864 (NNSANNSSYNNS), 912–974 (SSSN…QQPQ), 1053–1072 (DENQ…SSNE), and 1096–1109 (GRNS…SSLS).

The chain is ELMO domain-containing protein F (elmoF) from Dictyostelium discoideum (Social amoeba).